The sequence spans 479 residues: Calcium-dependent mitochondrial ATP-magnesium/phosphate carrier protein 3 (479 aa).

At M1–L208 the chain is on the mitochondrial intermembrane side. EF-hand domains follow at residues E33–P68, P69–E104, L105–E135, and I136–E171. 5 residues coordinate Ca(2+): D82, N84, D86, R88, and E93. Ca(2+) contacts are provided by D149, D151, N153, T155, and E160. Solcar repeat units follow at residues V203–M286, I294–L381, and P392–N475. The chain crosses the membrane as a helical span at residues L209–L226. Topologically, residues D227–R260 are mitochondrial matrix. Residues G261 to Y280 form a helical membrane-spanning segment. The Mitochondrial intermembrane portion of the chain corresponds to E281 to G303. A helical transmembrane segment spans residues G304–M317. Over D318–K355 the chain is Mitochondrial matrix. Residues G356–Y375 traverse the membrane as a helical segment. Residues E376–Q397 lie on the Mitochondrial intermembrane side of the membrane. The chain crosses the membrane as a helical span at residues L398–L415. Topologically, residues Q416 to R449 are mitochondrial matrix. Residues G450–Y469 traverse the membrane as a helical segment. Residues E470 to D479 are Mitochondrial intermembrane-facing.

This sequence belongs to the mitochondrial carrier (TC 2.A.29) family. Expressed in flowers, leaves, stems, roots and seedlings, mostly in seedlings.

The protein resides in the mitochondrion inner membrane. With respect to regulation, counter-exchange transport activity is saturable and inhibited by pyridoxal-5'-phosphate, EDTA and EGTA. Activated by calcium Ca(2+) and manganese Mn(2+) ions, and slightly by iron Fe(2+) and zinc Zn(2+) ions. Repressed by copper ions Cu(2+) and slightly by magnesium Mg(2+) ions. Magnesium Mg(2+) ions promotes slightly ATP uptake, ATP-Mg(2+) being exchanged with ATP(4-). In terms of biological role, calcium-dependent mitochondrial carrier protein that catalyzes the import of ATP co-transported with metal divalent cations across the mitochondrial inner membrane in exchange for phosphate (Pi). Can transport phosphate, AMP, ADP, ATP, adenosine 5'-phosphosulfate, sulfate and thiosulfate, and, to a lesser extent, other nucleotides. Binds calcium ions Ca(2+). Also mediates calcium uptake. This chain is Calcium-dependent mitochondrial ATP-magnesium/phosphate carrier protein 3, found in Arabidopsis thaliana (Mouse-ear cress).